Consider the following 77-residue polypeptide: Acyl carrier protein (77 aa).

In terms of domain architecture, Carrier spans 1–76 (MSIEERVKKI…SAIDYVTKAN (76 aa)). O-(pantetheine 4'-phosphoryl)serine is present on S36.

It belongs to the acyl carrier protein (ACP) family. Post-translationally, 4'-phosphopantetheine is transferred from CoA to a specific serine of apo-ACP by AcpS. This modification is essential for activity because fatty acids are bound in thioester linkage to the sulfhydryl of the prosthetic group.

It is found in the cytoplasm. Its pathway is lipid metabolism; fatty acid biosynthesis. Carrier of the growing fatty acid chain in fatty acid biosynthesis. The sequence is that of Acyl carrier protein from Actinobacillus pleuropneumoniae serotype 5b (strain L20).